Reading from the N-terminus, the 316-residue chain is Retinol dehydrogenase 12 (316 aa).

An NADP(+)-binding site is contributed by 46 to 52 (GANTGIG). Residue S175 coordinates substrate. Y200 acts as the Proton acceptor in catalysis.

The protein belongs to the short-chain dehydrogenases/reductases (SDR) family. As to expression, expressed in the inner segments of the photoreceptor in retina.

It carries out the reaction all-trans-retinol + NADP(+) = all-trans-retinal + NADPH + H(+). It catalyses the reaction 11-cis-retinol + NADP(+) = 11-cis-retinal + NADPH + H(+). The catalysed reaction is 9-cis-retinol + NADP(+) = 9-cis-retinal + NADPH + H(+). The enzyme catalyses a 4-hydroxynonen-1-ol + NADP(+) = a 4-hydroxynonenal + NADPH + H(+). It carries out the reaction (E)-non-2-en-1-ol + NADP(+) = (E)-non-2-enal + NADPH + H(+). It catalyses the reaction (Z)-non-6-en-1-ol + NADP(+) = (Z)-non-6-enal + NADPH + H(+). The catalysed reaction is nonan-1-ol + NADP(+) = nonanal + NADPH + H(+). It functions in the pathway cofactor metabolism; retinol metabolism. In terms of biological role, retinoids dehydrogenase/reductase with a clear preference for NADP. Displays high activity towards 9-cis, 11-cis and all-trans-retinal. Shows very weak activity toward 13-cis-retinol. Also exhibits activity, albeit with lower affinity than for retinaldehydes, towards lipid peroxidation products (C9 aldehydes) such as 4-hydroxynonenal and trans-2-nonenal. Plays an important function in photoreceptor cells to detoxify 4-hydroxynonenal and potentially other toxic aldehyde products resulting from lipid peroxidation. Has no dehydrogenase activity towards steroids. The sequence is that of Retinol dehydrogenase 12 (Rdh12) from Mus musculus (Mouse).